Here is a 356-residue protein sequence, read N- to C-terminus: Histidinol-phosphate aminotransferase (356 aa).

Lys-214 is subject to N6-(pyridoxal phosphate)lysine.

This sequence belongs to the class-II pyridoxal-phosphate-dependent aminotransferase family. Histidinol-phosphate aminotransferase subfamily. In terms of assembly, homodimer. Requires pyridoxal 5'-phosphate as cofactor.

The catalysed reaction is L-histidinol phosphate + 2-oxoglutarate = 3-(imidazol-4-yl)-2-oxopropyl phosphate + L-glutamate. Its pathway is amino-acid biosynthesis; L-histidine biosynthesis; L-histidine from 5-phospho-alpha-D-ribose 1-diphosphate: step 7/9. The chain is Histidinol-phosphate aminotransferase from Escherichia coli O81 (strain ED1a).